Consider the following 182-residue polypeptide: Ribosome maturation factor RimM (182 aa).

Residues 102–182 (EEGDYYWKDL…SIEVDWDPGF (81 aa)) form the PRC barrel domain.

Belongs to the RimM family. In terms of assembly, binds ribosomal protein uS19.

Its subcellular location is the cytoplasm. Functionally, an accessory protein needed during the final step in the assembly of 30S ribosomal subunit, possibly for assembly of the head region. Essential for efficient processing of 16S rRNA. May be needed both before and after RbfA during the maturation of 16S rRNA. It has affinity for free ribosomal 30S subunits but not for 70S ribosomes. This chain is Ribosome maturation factor RimM, found in Escherichia fergusonii (strain ATCC 35469 / DSM 13698 / CCUG 18766 / IAM 14443 / JCM 21226 / LMG 7866 / NBRC 102419 / NCTC 12128 / CDC 0568-73).